The sequence spans 198 residues: VDNFRAAHEAVTSLTGRGHRSIALVSNAPAQGEQQYLISSVRERIDGYRAALHDAQIKISPNLIVLGGWDTKNLADQVRALCISPNRPTAFLATDSSVALVLLGVLREMDLSIPDDVSLICFDDADWTSAITPPLTVISQPVRDLATAATEDLIARLKGETSAPPKETLLPAVLIERGSVSGSSQGRGCIPNSRNVGD.

It participates in opine metabolism; mannopine biosynthesis [regulation]. Functionally, possible repressor for genes for mannityl-opine utilization and / or plasmid conjugative transfer. This chain is Probable opine utilization operon repressor (opnR), found in Rhizobium rhizogenes (Agrobacterium rhizogenes).